A 545-amino-acid chain; its full sequence is Arginine-containing cyclodipeptide synthase ateA (545 aa).

Residues 390 to 425 are compositionally biased toward polar residues; it reads GNQQTPTQSADMDSTVSHRQQQPASSRSYTSKQNQM. The interval 390-433 is disordered; sequence GNQQTPTQSADMDSTVSHRQQQPASSRSYTSKQNQMPRPLVISV. The short motif at 434–438 is the Conserved DDXXE motif element; it reads DDPSE.

This sequence belongs to the arginine-containing cyclodipeptide synthase family.

The catalysed reaction is L-glutamyl-tRNA(Glu) + L-arginyl-tRNA(Arg) = cyclo(L-arginyl-L-glutamyl) + tRNA(Glu) + tRNA(Arg) + 2 H(+). It participates in secondary metabolite biosynthesis. Arginine-containing cyclodipeptide synthase; part of the cluster that mediates the biosynthesis of a highly modified cyclo-arginine-glutamate dipeptide (cRE). Within the pathway, ateA acts as the scaffold-generating enzyme and is responsible for formation of the cyclo-Arg-Glu diketopiperazine (cRW) from L-arginyl-tRNA(Arg) + L-glutamyl-tRNA(Glu). Additional enzymes from the cluster then further modify the cyclo-Arg-Glu diketopiperazine (cRW) scaffold. This chain is Arginine-containing cyclodipeptide synthase ateA, found in Aspergillus terreus.